Here is a 164-residue protein sequence, read N- to C-terminus: Transcription antitermination protein NusB (164 aa).

It belongs to the NusB family.

Its function is as follows. Involved in transcription antitermination. Required for transcription of ribosomal RNA (rRNA) genes. Binds specifically to the boxA antiterminator sequence of the ribosomal RNA (rrn) operons. In Mycolicibacterium gilvum (strain PYR-GCK) (Mycobacterium gilvum (strain PYR-GCK)), this protein is Transcription antitermination protein NusB.